Consider the following 438-residue polypeptide: Glutamate--tRNA ligase 2 (438 aa).

Positions 6-16 match the 'HIGH' region motif; sequence PSPTGDMHTGN. A 'KMSKS' region motif is present at residues 231–235; sequence KMSKR. ATP is bound at residue K234.

This sequence belongs to the class-I aminoacyl-tRNA synthetase family. Glutamate--tRNA ligase type 1 subfamily. In terms of assembly, monomer.

Its subcellular location is the cytoplasm. The enzyme catalyses tRNA(Glu) + L-glutamate + ATP = L-glutamyl-tRNA(Glu) + AMP + diphosphate. Functionally, catalyzes the attachment of glutamate to tRNA(Glu) in a two-step reaction: glutamate is first activated by ATP to form Glu-AMP and then transferred to the acceptor end of tRNA(Glu). In Wolinella succinogenes (strain ATCC 29543 / DSM 1740 / CCUG 13145 / JCM 31913 / LMG 7466 / NCTC 11488 / FDC 602W) (Vibrio succinogenes), this protein is Glutamate--tRNA ligase 2.